The following is a 372-amino-acid chain: Tetraacyldisaccharide 4'-kinase (372 aa).

60-67 (TVGGSGKT) serves as a coordination point for ATP.

It belongs to the LpxK family.

It catalyses the reaction a lipid A disaccharide + ATP = a lipid IVA + ADP + H(+). Its pathway is glycolipid biosynthesis; lipid IV(A) biosynthesis; lipid IV(A) from (3R)-3-hydroxytetradecanoyl-[acyl-carrier-protein] and UDP-N-acetyl-alpha-D-glucosamine: step 6/6. Its function is as follows. Transfers the gamma-phosphate of ATP to the 4'-position of a tetraacyldisaccharide 1-phosphate intermediate (termed DS-1-P) to form tetraacyldisaccharide 1,4'-bis-phosphate (lipid IVA). This Psychrobacter cryohalolentis (strain ATCC BAA-1226 / DSM 17306 / VKM B-2378 / K5) protein is Tetraacyldisaccharide 4'-kinase.